The primary structure comprises 555 residues: Glutamine--tRNA ligase (555 aa).

The short motif at 35 to 45 is the 'HIGH' region element; sequence PEPNGYLHIGH. Residues 36 to 38 and 42 to 48 contribute to the ATP site; these read EPN and HIGHAKS. Residues D68 and Y213 each coordinate L-glutamine. ATP is bound by residues T232 and 262-263; that span reads RL. The short motif at 269-273 is the 'KMSKS' region element; it reads ITSKR.

It belongs to the class-I aminoacyl-tRNA synthetase family. As to quaternary structure, monomer.

The protein resides in the cytoplasm. The catalysed reaction is tRNA(Gln) + L-glutamine + ATP = L-glutaminyl-tRNA(Gln) + AMP + diphosphate. The chain is Glutamine--tRNA ligase from Azotobacter vinelandii (strain DJ / ATCC BAA-1303).